We begin with the raw amino-acid sequence, 250 residues long: Bcl-2-like protein 12 (250 aa).

Positions Gly24–Phe46 are disordered. Ser29 carries the post-translational modification Phosphoserine. The residue at position 33 (Thr33) is a Phosphothreonine. Ser37 is modified (phosphoserine). The residue at position 60 (Arg60) is an Omega-N-methylarginine. Phosphoserine is present on residues Ser111, Ser158, Ser159, Ser161, and Ser189. The BH2 signature appears at Trp227–Leu238.

It belongs to the Bcl-2 family. Expressed mainly in breast, thymus, prostate, fetal liver, colon, placenta, pancreas, small intestine, spinal cord, kidney, and bone marrow and to a lesser extent in many other tissues. Isoform 2 is primarily expressed in skeletal muscle.

The protein is Bcl-2-like protein 12 of Homo sapiens (Human).